Consider the following 96-residue polypeptide: UPF0235 protein Ent638_3359 (96 aa).

Belongs to the UPF0235 family.

The polypeptide is UPF0235 protein Ent638_3359 (Enterobacter sp. (strain 638)).